The chain runs to 249 residues: Aliphatic sulfonates import ATP-binding protein SsuB 2 (249 aa).

Positions 15–231 (VHVRDLARRF…DHGDPRFAQF (217 aa)) constitute an ABC transporter domain. 47–54 (GRSGSGKS) contributes to the ATP binding site.

The protein belongs to the ABC transporter superfamily. Aliphatic sulfonates importer (TC 3.A.1.17.2) family. The complex is composed of two ATP-binding proteins (SsuB), two transmembrane proteins (SsuC) and a solute-binding protein (SsuA).

It is found in the cell inner membrane. It carries out the reaction ATP + H2O + aliphatic sulfonate-[sulfonate-binding protein]Side 1 = ADP + phosphate + aliphatic sulfonateSide 2 + [sulfonate-binding protein]Side 1.. Its function is as follows. Part of the ABC transporter complex SsuABC involved in aliphatic sulfonates import. Responsible for energy coupling to the transport system. The chain is Aliphatic sulfonates import ATP-binding protein SsuB 2 from Rhizobium johnstonii (strain DSM 114642 / LMG 32736 / 3841) (Rhizobium leguminosarum bv. viciae).